Consider the following 152-residue polypeptide: Large ribosomal subunit protein uL24 (152 aa).

Positions 128 to 152 (VVEEKETSKTSEGGGKTIEETEGEK) are disordered.

It belongs to the universal ribosomal protein uL24 family. As to quaternary structure, part of the 50S ribosomal subunit.

One of two assembly initiator proteins, it binds directly to the 5'-end of the 23S rRNA, where it nucleates assembly of the 50S subunit. Functionally, located at the polypeptide exit tunnel on the outside of the subunit. The protein is Large ribosomal subunit protein uL24 of Staphylothermus marinus (strain ATCC 43588 / DSM 3639 / JCM 9404 / F1).